Reading from the N-terminus, the 169-residue chain is Interleukin-36 gamma (169 aa).

Residues 1–17 (MRGTPGDADGGGRAVYQ) constitute a propeptide that is removed on maturation.

Belongs to the IL-1 family. In terms of assembly, interacts with cargo receptor TMED10; the interaction mediates the translocation from the cytoplasm into the ERGIC (endoplasmic reticulum-Golgi intermediate compartment) and thereby secretion. N-terminal truncation leads to a dramatic enhancement of its activity (&gt;1000-fold). Proteolytically cleaved by cathepsin CTSG. In terms of tissue distribution, highly expressed in tissues containing epithelial cells: skin, lung, stomach and esophagus. Expressed in bronchial epithelial. In skin is expressed only in keratinocytes but not in fibroblasts, endothelial cells or melanocytes. Up-regulated in lesional psoriasis skin. Expressed in monocyte-derived dendritic cells and M1 macrophages.

The protein localises to the cytoplasm. It is found in the secreted. Its function is as follows. Cytokine that binds to and signals through the IL1RL2/IL-36R receptor which in turn activates NF-kappa-B and MAPK signaling pathways in target cells. Part of the IL-36 signaling system that is thought to be present in epithelial barriers and to take part in local inflammatory response; similar to the IL-1 system with which it shares the coreceptor IL1RAP. Seems to be involved in skin inflammatory response by acting on keratinocytes, dendritic cells and indirectly on T-cells to drive tissue infiltration, cell maturation and cell proliferation. In cultured keratinocytes induces the expression of macrophage, T-cell, and neutrophil chemokines, such as CCL3, CCL4, CCL5, CCL2, CCL17, CCL22, CL20, CCL5, CCL2, CCL17, CCL22, CXCL8, CCL20 and CXCL1; also stimulates its own expression and that of the prototypic cutaneous pro-inflammatory parameters TNF-alpha, S100A7/psoriasin and inducible NOS. May play a role in pro-inflammatory responses during particular neutrophilic airway inflammation: activates mitogen-activated protein kinases and NF-kappa B in primary lung fibroblasts, and stimulates the expression of IL-8 and CXCL3 and Th17 chemokine CCL20 in lung fibroblasts. May be involved in the innate immune response to fungal pathogens, such as Aspergillus fumigatus. This Homo sapiens (Human) protein is Interleukin-36 gamma.